The following is a 401-amino-acid chain: Mitochondrial distribution and morphology protein 12 (401 aa).

One can recognise an SMP-LTD domain in the interval 1–401 (MSIDINWDTL…VYPSFWTFLV (401 aa)). Over residues 70–88 (YEEDEDYPDNEDDDDDEAG) the composition is skewed to acidic residues. 2 disordered regions span residues 70 to 95 (YEED…NPRN) and 190 to 247 (SLTL…EKSP). Positions 195 to 205 (PQSHPDPSSRP) are enriched in low complexity. A compositionally biased stretch (basic and acidic residues) spans 209 to 220 (HQHDDERRRSLA).

It belongs to the MDM12 family. Component of the ER-mitochondria encounter structure (ERMES) or MDM complex, composed of MMM1, MDM10, MDM12 and MDM34. An MMM1 homodimer associates with one molecule of MDM12 on each side in a pairwise head-to-tail manner, and the SMP-LTD domains of MMM1 and MDM12 generate a continuous hydrophobic tunnel for phospholipid trafficking.

It is found in the mitochondrion outer membrane. The protein localises to the endoplasmic reticulum membrane. Its function is as follows. Component of the ERMES/MDM complex, which serves as a molecular tether to connect the endoplasmic reticulum (ER) and mitochondria. Components of this complex are involved in the control of mitochondrial shape and protein biogenesis, and function in nonvesicular lipid trafficking between the ER and mitochondria. MDM12 is required for the interaction of the ER-resident membrane protein MMM1 and the outer mitochondrial membrane-resident beta-barrel protein MDM10. The MDM12-MMM1 subcomplex functions in the major beta-barrel assembly pathway that is responsible for biogenesis of all mitochondrial outer membrane beta-barrel proteins, and acts in a late step after the SAM complex. The MDM10-MDM12-MMM1 subcomplex further acts in the TOM40-specific pathway after the action of the MDM12-MMM1 complex. Essential for establishing and maintaining the structure of mitochondria and maintenance of mtDNA nucleoids. This is Mitochondrial distribution and morphology protein 12 from Phaeosphaeria nodorum (strain SN15 / ATCC MYA-4574 / FGSC 10173) (Glume blotch fungus).